We begin with the raw amino-acid sequence, 225 residues long: Biosynthetic peptidoglycan transglycosylase (225 aa).

Residues 12-32 (IWFVAWRFLLLFVIVLFLFRF) traverse the membrane as a helical segment.

It belongs to the glycosyltransferase 51 family.

The protein localises to the cell inner membrane. It catalyses the reaction [GlcNAc-(1-&gt;4)-Mur2Ac(oyl-L-Ala-gamma-D-Glu-L-Lys-D-Ala-D-Ala)](n)-di-trans,octa-cis-undecaprenyl diphosphate + beta-D-GlcNAc-(1-&gt;4)-Mur2Ac(oyl-L-Ala-gamma-D-Glu-L-Lys-D-Ala-D-Ala)-di-trans,octa-cis-undecaprenyl diphosphate = [GlcNAc-(1-&gt;4)-Mur2Ac(oyl-L-Ala-gamma-D-Glu-L-Lys-D-Ala-D-Ala)](n+1)-di-trans,octa-cis-undecaprenyl diphosphate + di-trans,octa-cis-undecaprenyl diphosphate + H(+). The protein operates within cell wall biogenesis; peptidoglycan biosynthesis. Its function is as follows. Peptidoglycan polymerase that catalyzes glycan chain elongation from lipid-linked precursors. This is Biosynthetic peptidoglycan transglycosylase from Marinomonas sp. (strain MWYL1).